We begin with the raw amino-acid sequence, 618 residues long: 1-deoxy-D-xylulose-5-phosphate synthase (618 aa).

Residues histidine 72 and glycine 113 to alanine 115 contribute to the thiamine diphosphate site. Residue aspartate 144 coordinates Mg(2+). Residues glycine 145–alanine 146, asparagine 173, histidine 284, and glutamate 359 contribute to the thiamine diphosphate site. Asparagine 173 provides a ligand contact to Mg(2+).

The protein belongs to the transketolase family. DXPS subfamily. Homodimer. The cofactor is Mg(2+). Thiamine diphosphate serves as cofactor.

The catalysed reaction is D-glyceraldehyde 3-phosphate + pyruvate + H(+) = 1-deoxy-D-xylulose 5-phosphate + CO2. The protein operates within metabolic intermediate biosynthesis; 1-deoxy-D-xylulose 5-phosphate biosynthesis; 1-deoxy-D-xylulose 5-phosphate from D-glyceraldehyde 3-phosphate and pyruvate: step 1/1. In terms of biological role, catalyzes the acyloin condensation reaction between C atoms 2 and 3 of pyruvate and glyceraldehyde 3-phosphate to yield 1-deoxy-D-xylulose-5-phosphate (DXP). In Dictyoglomus turgidum (strain DSM 6724 / Z-1310), this protein is 1-deoxy-D-xylulose-5-phosphate synthase.